The chain runs to 291 residues: Glycine--tRNA ligase alpha subunit (291 aa).

Belongs to the class-II aminoacyl-tRNA synthetase family. As to quaternary structure, tetramer of two alpha and two beta subunits.

The protein localises to the cytoplasm. The catalysed reaction is tRNA(Gly) + glycine + ATP = glycyl-tRNA(Gly) + AMP + diphosphate. The chain is Glycine--tRNA ligase alpha subunit from Rhizorhabdus wittichii (strain DSM 6014 / CCUG 31198 / JCM 15750 / NBRC 105917 / EY 4224 / RW1) (Sphingomonas wittichii).